The following is a 1056-amino-acid chain: Carbamoyl phosphate synthase large chain (1056 aa).

The segment at Met-1 to Asp-399 is carboxyphosphate synthetic domain. 12 residues coordinate ATP: Arg-127, Arg-167, Gly-173, Gly-174, Lys-206, Leu-208, Glu-213, Gly-239, Val-240, His-241, Gln-282, and Glu-296. An ATP-grasp 1 domain is found at Gln-131–Ile-325. Gln-282, Glu-296, and Asn-298 together coordinate Mg(2+). Residues Gln-282, Glu-296, and Asn-298 each contribute to the Mn(2+) site. The tract at residues Ile-400–Ile-536 is oligomerization domain. Positions Pro-537–Asn-919 are carbamoyl phosphate synthetic domain. In terms of domain architecture, ATP-grasp 2 spans Ser-661–Leu-849. The ATP site is built by Arg-697, Lys-736, Ile-738, Glu-742, Gly-766, Val-767, His-768, Ser-769, Gln-809, and Glu-820. Residues Gln-809, Glu-820, and Asn-822 each coordinate Mg(2+). Gln-809, Glu-820, and Asn-822 together coordinate Mn(2+). An MGS-like domain is found at Ser-915–Glu-1043. The tract at residues Glu-920–Arg-1056 is allosteric domain.

It belongs to the CarB family. As to quaternary structure, composed of two chains; the small (or glutamine) chain promotes the hydrolysis of glutamine to ammonia, which is used by the large (or ammonia) chain to synthesize carbamoyl phosphate. Tetramer of heterodimers (alpha,beta)4. It depends on Mg(2+) as a cofactor. Mn(2+) serves as cofactor.

The catalysed reaction is hydrogencarbonate + L-glutamine + 2 ATP + H2O = carbamoyl phosphate + L-glutamate + 2 ADP + phosphate + 2 H(+). It catalyses the reaction hydrogencarbonate + NH4(+) + 2 ATP = carbamoyl phosphate + 2 ADP + phosphate + 2 H(+). It functions in the pathway amino-acid biosynthesis; L-arginine biosynthesis; carbamoyl phosphate from bicarbonate: step 1/1. Its pathway is pyrimidine metabolism; UMP biosynthesis via de novo pathway; (S)-dihydroorotate from bicarbonate: step 1/3. Its function is as follows. Large subunit of the glutamine-dependent carbamoyl phosphate synthetase (CPSase). CPSase catalyzes the formation of carbamoyl phosphate from the ammonia moiety of glutamine, carbonate, and phosphate donated by ATP, constituting the first step of 2 biosynthetic pathways, one leading to arginine and/or urea and the other to pyrimidine nucleotides. The large subunit (synthetase) binds the substrates ammonia (free or transferred from glutamine from the small subunit), hydrogencarbonate and ATP and carries out an ATP-coupled ligase reaction, activating hydrogencarbonate by forming carboxy phosphate which reacts with ammonia to form carbamoyl phosphate. This Pyrococcus furiosus (strain ATCC 43587 / DSM 3638 / JCM 8422 / Vc1) protein is Carbamoyl phosphate synthase large chain.